The chain runs to 139 residues: MNETFIPASDYKKKNWCLIDCKDQKLGRIAVVISRLLSGKQKLHYHPAFDVGDYVVVINAQDMIFDSQQPRFSVNVPGRPGRLLKQVINALPSQLLMTAIYGMLPEGSAKKSLPKRLKIYNGPDHPHAAQNPIKLDEFI.

Belongs to the universal ribosomal protein uL13 family. Part of the 50S ribosomal subunit.

The protein resides in the plastid. The protein localises to the chloroplast. This chain is Large ribosomal subunit protein uL13c, found in Trieres chinensis (Marine centric diatom).